Here is an 839-residue protein sequence, read N- to C-terminus: Autophagy-related protein 9A (839 aa).

Ala2 bears the N-acetylalanine mark. The Cytoplasmic segment spans residues 2–61 (AQFDTEYQRLEASYSDSPPGEEDLLVHVAEGSKSPWHHIENLDLFFSRVYNLHQKNGFTC). Positions 8 to 11 (YQRL) match the Tyrosine-based sorting signal motif. A phosphoserine mark is found at Ser14, Ser16, and Ser18. A helical membrane pass occupies residues 62-84 (MLIGEMFELMQFLFVVAFTTFLV). Topologically, residues 85 to 128 (SCVDYDILFANKMVNHSLHPTEPVKVTLPDAFLPAQVCSARIQE) are lumenal. N-linked (GlcNAc...) asparagine glycosylation occurs at Asn99. A helical membrane pass occupies residues 129–154 (NGSLITILVIAGVFWIHRLIKFIYNI). The Cytoplasmic portion of the chain corresponds to 155–290 (CCYWEIHSFY…ELAQRLSNRI (136 aa)). Residues 291 to 301 (LWIGIANFLLC) lie within the membrane without spanning it. Residues 302–319 (PLILIWQILYAFFSYAEV) lie on the Cytoplasmic side of the membrane. An intramembrane segment occupies 320–328 (LKREPGALG). The Cytoplasmic segment spans residues 329-371 (ARCWSLYGRCYLRHFNELEHELQSRLNRGYKPASKYMNCFLSP). A helical membrane pass occupies residues 372 to 397 (LLTLLAKNGAFFAGSILAVLIALTIY). Residues 398 to 406 (DEDVLAVEH) are Lumenal-facing. A helical transmembrane segment spans residues 407-424 (VLTTVTLLGVTVTVCRSF). Topologically, residues 425–470 (IPDQHMVFCPEQLLRVILAHIHYMPDHWQGNAHRSQTRDEFAQLFQ) are cytoplasmic. Residues 471–480 (YKAVFILEEL) lie within the membrane without spanning it. At 481-483 (LSP) the chain is on the cytoplasmic side. Residues 484–492 (IVTPLILIF) lie within the membrane without spanning it. Residues 493–839 (CLRPRALEII…DELPPQVHKV (347 aa)) lie on the Cytoplasmic side of the membrane. Ser656 is modified (phosphoserine). 2 disordered regions span residues 657–686 (PLQPGAAPQGRVPSTMTGSGVDARTASSGS) and 717–839 (HKQQ…VHKV). Residues 724–736 (EPERHVWHRRESD) are compositionally biased toward basic and acidic residues. Residues Ser735, Ser738, Ser741, and Ser828 each carry the phosphoserine modification. Composition is skewed to acidic residues over residues 737–747 (ESGESAPEEGG) and 823–832 (VPEEGSEDEL).

The protein belongs to the ATG9 family. In terms of assembly, homotrimer; forms a homotrimer with a central pore that forms a path between the two membrane leaflets. Interacts (via cytoplasmic its C-terminus) with ATG2A. Interacts with SUPT20H. Interacts (via the tyrosine-based sorting signal motif) with AP4M1; promoting association with the AP-4 complex. Interacts with ARFIP1 and ARFIP2. Interacts with ATG4A; the interaction is direct and promotes ATG9A trafficking. Ufmylated in a DDRGK1 dependent manner.

It localises to the preautophagosomal structure membrane. It is found in the cytoplasmic vesicle. The protein resides in the autophagosome membrane. Its subcellular location is the golgi apparatus. The protein localises to the trans-Golgi network membrane. It localises to the late endosome membrane. It is found in the recycling endosome membrane. The protein resides in the endoplasmic reticulum membrane. Its subcellular location is the mitochondrion membrane. The catalysed reaction is a 1,2-diacyl-sn-glycero-3-phosphocholine(in) = a 1,2-diacyl-sn-glycero-3-phosphocholine(out). It carries out the reaction a 1,2-diacyl-sn-glycero-3-phospho-L-serine(in) = a 1,2-diacyl-sn-glycero-3-phospho-L-serine(out). It catalyses the reaction a 1,2-diacyl-sn-glycero-3-phosphoethanolamine(in) = a 1,2-diacyl-sn-glycero-3-phosphoethanolamine(out). Phospholipid scramblase involved in autophagy by mediating autophagosomal membrane expansion. Cycles between the preautophagosomal structure/phagophore assembly site (PAS) and the cytoplasmic vesicle pool and supplies membrane for the growing autophagosome. Lipid scramblase activity plays a key role in preautophagosomal structure/phagophore assembly by distributing the phospholipids that arrive through ATG2 (ATG2A or ATG2B) from the cytoplasmic to the luminal leaflet of the bilayer, thereby driving autophagosomal membrane expansion. Also required to supply phosphatidylinositol 4-phosphate to the autophagosome initiation site by recruiting the phosphatidylinositol 4-kinase beta (PI4KB) in a process dependent on ARFIP2, but not ARFIP1. In addition to autophagy, also plays a role in necrotic cell death. The protein is Autophagy-related protein 9A of Mus musculus (Mouse).